The following is a 278-amino-acid chain: HTH-type transcriptional activator RhaS (278 aa).

An HTH araC/xylS-type domain is found at 174-272 (NQLMAWLEDH…NWSPRDIRQG (99 aa)). DNA-binding regions (H-T-H motif) lie at residues 191 to 212 (EAVA…KQHT) and 239 to 262 (VTEI…RREF).

Binds DNA as a dimer.

The protein localises to the cytoplasm. Its function is as follows. Activates expression of the rhaBAD and rhaT operons. The sequence is that of HTH-type transcriptional activator RhaS from Salmonella paratyphi A (strain ATCC 9150 / SARB42).